A 361-amino-acid chain; its full sequence is Outer membrane protein P2 (361 aa).

An N-terminal signal peptide occupies residues 1-20 (MKKTLAALIVGAFAASAANA).

It belongs to the Gram-negative porin family. In terms of assembly, homotrimer.

The protein localises to the cell outer membrane. Forms pores that allow passive diffusion of small molecules across the outer membrane. The sequence is that of Outer membrane protein P2 (ompP2) from Haemophilus influenzae.